Here is a 479-residue protein sequence, read N- to C-terminus: Aspartyl/glutamyl-tRNA(Asn/Gln) amidotransferase subunit B (479 aa).

This sequence belongs to the GatB/GatE family. GatB subfamily. As to quaternary structure, heterotrimer of A, B and C subunits.

It catalyses the reaction L-glutamyl-tRNA(Gln) + L-glutamine + ATP + H2O = L-glutaminyl-tRNA(Gln) + L-glutamate + ADP + phosphate + H(+). It carries out the reaction L-aspartyl-tRNA(Asn) + L-glutamine + ATP + H2O = L-asparaginyl-tRNA(Asn) + L-glutamate + ADP + phosphate + 2 H(+). Allows the formation of correctly charged Asn-tRNA(Asn) or Gln-tRNA(Gln) through the transamidation of misacylated Asp-tRNA(Asn) or Glu-tRNA(Gln) in organisms which lack either or both of asparaginyl-tRNA or glutaminyl-tRNA synthetases. The reaction takes place in the presence of glutamine and ATP through an activated phospho-Asp-tRNA(Asn) or phospho-Glu-tRNA(Gln). This is Aspartyl/glutamyl-tRNA(Asn/Gln) amidotransferase subunit B from Streptococcus pyogenes serotype M3 (strain ATCC BAA-595 / MGAS315).